Reading from the N-terminus, the 570-residue chain is Polypeptide N-acetylgalactosaminyltransferase 2 (570 aa).

The Cytoplasmic portion of the chain corresponds to 1–6 (MRRRSR). Residues 7 to 24 (MLLCFALLWVLGIAYYMY) traverse the membrane as a helical; Signal-anchor for type II membrane protein segment. Residues 25-570 (SGGGSALAAG…QWKFSLNLQQ (546 aa)) lie on the Lumenal side of the membrane. Ser-29 carries O-linked (Xyl...) (chondroitin sulfate) serine glycosylation. Intrachain disulfides connect Cys-125–Cys-353, Cys-344–Cys-422, Cys-455–Cys-472, and Cys-495–Cys-512. Positions 134-239 (LPATSVVITF…ERWLEPLLER (106 aa)) are catalytic subdomain A. The substrate site is built by Thr-142, Asp-175, and Arg-200. Position 223 (Asp-223) interacts with Mn(2+). Ser-224 is a substrate binding site. His-225 is a binding site for Mn(2+). The interval 299 to 361 (PIKTPMIAGG…PCSRVGHVFR (63 aa)) is catalytic subdomain B. Trp-330 is a substrate binding site. Residue His-358 coordinates Mn(2+). Residues Arg-361, His-364, and Tyr-366 each coordinate substrate. The Ricin B-type lectin domain maps to 442–565 (QDIAFGALQQ…PALSQQWKFS (124 aa)). An N-linked (GlcNAc...) asparagine glycan is attached at Asn-515. Phosphoserine is present on Ser-535. Residues Cys-538 and Cys-554 are joined by a disulfide bond.

Belongs to the glycosyltransferase 2 family. GalNAc-T subfamily. Requires Mn(2+) as cofactor. As to expression, widely expressed at high level.

The protein localises to the golgi apparatus. It is found in the golgi stack membrane. Its subcellular location is the secreted. The catalysed reaction is L-seryl-[protein] + UDP-N-acetyl-alpha-D-galactosamine = a 3-O-[N-acetyl-alpha-D-galactosaminyl]-L-seryl-[protein] + UDP + H(+). The enzyme catalyses L-threonyl-[protein] + UDP-N-acetyl-alpha-D-galactosamine = a 3-O-[N-acetyl-alpha-D-galactosaminyl]-L-threonyl-[protein] + UDP + H(+). The protein operates within protein modification; protein glycosylation. In terms of biological role, catalyzes the initial reaction in O-linked oligosaccharide biosynthesis, the transfer of an N-acetyl-D-galactosamine residue to a serine or threonine residue on the protein receptor. Has a broad spectrum of substrates for peptides such as EA2, Muc5AC, Muc1a, Muc1b. Probably involved in O-linked glycosylation of the immunoglobulin A1 (IgA1) hinge region. Involved in O-linked glycosylation of APOC-III, ANGPTL3 and PLTP. It participates in the regulation of HDL-C metabolism. The polypeptide is Polypeptide N-acetylgalactosaminyltransferase 2 (Galnt2) (Mus musculus (Mouse)).